We begin with the raw amino-acid sequence, 485 residues long: Hexokinase (485 aa).

S15 carries the post-translational modification Phosphoserine. One can recognise a Hexokinase domain in the interval 21 to 468 (ANLMEQIHGL…SGVGAAIIAC (448 aa)). The interval 75–208 (TGKETGDFLA…NIPINVVALI (134 aa)) is hexokinase small subdomain. Residue K111 participates in ATP binding. Positions 151–177 (PLGFTFSYPASQKKINSGVLQRWTKGF) are glucose-binding. A hexokinase large subdomain region spans residues 209 to 457 (NDTTGTLVAS…HPIQLVAAED (249 aa)).

In terms of assembly, monomer and homodimer. The monomeric form is active, the homodimeric form inactive.

The catalysed reaction is a D-hexose + ATP = a D-hexose 6-phosphate + ADP + H(+). The enzyme catalyses D-fructose + ATP = D-fructose 6-phosphate + ADP + H(+). It carries out the reaction D-glucose + ATP = D-glucose 6-phosphate + ADP + H(+). It participates in carbohydrate metabolism; hexose metabolism. It functions in the pathway carbohydrate degradation; glycolysis; D-glyceraldehyde 3-phosphate and glycerone phosphate from D-glucose: step 1/4. Functionally, catalyzes the phosphorylation of hexose, such as D-glucose and D-fructose, to hexose 6-phosphate (D-glucose 6-phosphate and D-fructose 6-phosphate, respectively). Has higher affinity for D-glucose. Mediates the initial step of glycolysis by catalyzing phosphorylation of D-glucose to D-glucose 6-phosphate. In Kluyveromyces lactis (strain ATCC 8585 / CBS 2359 / DSM 70799 / NBRC 1267 / NRRL Y-1140 / WM37) (Yeast), this protein is Hexokinase (RAG5).